Here is a 365-residue protein sequence, read N- to C-terminus: Flagellar P-ring protein (365 aa).

The N-terminal stretch at methionine 1–alanine 19 is a signal peptide.

The protein belongs to the FlgI family. In terms of assembly, the basal body constitutes a major portion of the flagellar organelle and consists of four rings (L,P,S, and M) mounted on a central rod.

Its subcellular location is the periplasm. It localises to the bacterial flagellum basal body. Assembles around the rod to form the L-ring and probably protects the motor/basal body from shearing forces during rotation. In Shigella dysenteriae serotype 1 (strain Sd197), this protein is Flagellar P-ring protein.